We begin with the raw amino-acid sequence, 929 residues long: Valine--tRNA ligase (929 aa).

The short motif at 59–69 (PNVTGSLHMGH) is the 'HIGH' region element. The 'KMSKS' region signature appears at 557 to 561 (KMSKS). Lys-560 provides a ligand contact to ATP. Residues 862–929 (LVDLDALRGR…LARQRLSDLG (68 aa)) are a coiled coil.

The protein belongs to the class-I aminoacyl-tRNA synthetase family. ValS type 1 subfamily. In terms of assembly, monomer.

It localises to the cytoplasm. The enzyme catalyses tRNA(Val) + L-valine + ATP = L-valyl-tRNA(Val) + AMP + diphosphate. Its function is as follows. Catalyzes the attachment of valine to tRNA(Val). As ValRS can inadvertently accommodate and process structurally similar amino acids such as threonine, to avoid such errors, it has a 'posttransfer' editing activity that hydrolyzes mischarged Thr-tRNA(Val) in a tRNA-dependent manner. The polypeptide is Valine--tRNA ligase (Prochlorococcus marinus (strain MIT 9313)).